The sequence spans 493 residues: MHIKMKDIFKAFGQNQVLSGVSFELQEGEVHALMGENGAGKSTLMNLLTGLHKLDSGTIEIDGKETYFSDPKEAEQNGIAFIHQELNIWPEMTVLENLFIGRELSSKLGFLNNKKMKALAKEQLERLGVSISLEKEAGDCSVGQQQMIEIAKALMTDAKVIIMDEPTAALTEREIEKLFGVIRALKKNGVSIVYISHRMEEIFTICDRITVMRDGKTVDTKRIPDTDFHEVVKKMVGRELTERYPERQPNPGRVVLEVKQASKKGVFQNISFSVRSGEIVGISGLMGAGRTELMRAVFGLDPLDSGDIFIEGKKAALKKPSDAVQKGIGFITENRKDEGLVLDTSIRENIALPNLASFSPKGWIDKKSEQEFVDLLIKRLTIKTESPETHARNLSGGNQQKVVIAKWIGIGPKVLILDEPTRGVDVGAKREIYQLMNELTDRGVAIVMVSSELPEILGMSDRVLVIHEGTLSGELSRNDATQERIMTLATGGR.

2 ABC transporter domains span residues Ile-3–Glu-239 and Gly-252–Arg-493. ATP is bound at residue Gly-35 to Ser-42.

It belongs to the ABC transporter superfamily. Ribose importer (TC 3.A.1.2.1) family. As to quaternary structure, the complex is composed of an ATP-binding protein (RbsA), two transmembrane proteins (RbsC) and a solute-binding protein (RbsB).

Its subcellular location is the cell membrane. It carries out the reaction D-ribose(out) + ATP + H2O = D-ribose(in) + ADP + phosphate + H(+). Functionally, part of the ABC transporter complex RbsABC involved in ribose import. Responsible for energy coupling to the transport system. This chain is Ribose import ATP-binding protein RbsA, found in Bacillus licheniformis (strain ATCC 14580 / DSM 13 / JCM 2505 / CCUG 7422 / NBRC 12200 / NCIMB 9375 / NCTC 10341 / NRRL NRS-1264 / Gibson 46).